A 772-amino-acid polypeptide reads, in one-letter code: Mitochondrial intermediate peptidase (772 aa).

The transit peptide at 1-37 directs the protein to the mitochondrion; that stretch reads MLRTIILKAGSNASIPSLSRQNKLLRFFATAGAVSRT. His558 lines the Zn(2+) pocket. Glu559 is an active-site residue. Residues His562 and His565 each coordinate Zn(2+).

It belongs to the peptidase M3 family. The cofactor is Zn(2+).

The protein localises to the mitochondrion matrix. The enzyme catalyses Release of an N-terminal octapeptide as second stage of processing of some proteins imported into the mitochondrion.. Stimulated by Fe(2+). Its function is as follows. Cleaves proteins, imported into the mitochondrion, to their mature size. While most mitochondrial precursor proteins are processed to the mature form in one step by mitochondrial processing peptidase (MPP), the sequential cleavage by MIP of an octapeptide after initial processing by MPP is a required step for a subgroup of nuclear-encoded precursor proteins destined for the matrix or the inner membrane. Cleaves precursor proteins of respiratory components, including subunits of the electron transport chain and tricarboxylic acid cycle enzymes, and components of the mitochondrial genetic machinery, including ribosomal proteins, translation factors, and proteins required for mitochondrial DNA metabolism. The polypeptide is Mitochondrial intermediate peptidase (OCT1) (Saccharomyces cerevisiae (strain YJM789) (Baker's yeast)).